We begin with the raw amino-acid sequence, 277 residues long: Large ribosomal subunit protein uL2 (277 aa).

Residues 222–277 are disordered; sequence GSVMNPNDHPHGGGEGKAPVGRKAPSTPWGKPALGLKTRNKKAKSDKLIVRRRNQK.

Belongs to the universal ribosomal protein uL2 family. Part of the 50S ribosomal subunit. Forms a bridge to the 30S subunit in the 70S ribosome.

In terms of biological role, one of the primary rRNA binding proteins. Required for association of the 30S and 50S subunits to form the 70S ribosome, for tRNA binding and peptide bond formation. It has been suggested to have peptidyltransferase activity; this is somewhat controversial. Makes several contacts with the 16S rRNA in the 70S ribosome. In Streptococcus agalactiae serotype Ia (strain ATCC 27591 / A909 / CDC SS700), this protein is Large ribosomal subunit protein uL2.